The primary structure comprises 198 residues: Cytokinin riboside 5'-monophosphate phosphoribohydrolase (198 aa).

Substrate-binding positions include glutamate 91, 109 to 110 (RK), 126 to 132 (GVGTAEE), and threonine 138.

Belongs to the LOG family.

It catalyses the reaction N(6)-(dimethylallyl)adenosine 5'-phosphate + H2O = N(6)-dimethylallyladenine + D-ribose 5-phosphate. The catalysed reaction is 9-ribosyl-trans-zeatin 5'-phosphate + H2O = trans-zeatin + D-ribose 5-phosphate. Its function is as follows. Catalyzes the hydrolytic removal of ribose 5'-monophosphate from nitrogen N6-modified adenosines, the final step of bioactive cytokinin synthesis. The chain is Cytokinin riboside 5'-monophosphate phosphoribohydrolase (fas6) from Rhodococcoides fascians (Rhodococcus fascians).